A 229-amino-acid polypeptide reads, in one-letter code: Protein fmp52-2, mitochondrial (229 aa).

Residues 1-44 (MTAAAVFGCTGAVGSQILATLLASDAFSSVATVSRKLPTAESPK) constitute a mitochondrion transit peptide.

It belongs to the FMP52 family.

It is found in the mitochondrion outer membrane. This is Protein fmp52-2, mitochondrial (fmp522) from Aspergillus terreus (strain NIH 2624 / FGSC A1156).